The chain runs to 596 residues: Invasin CotH7 (596 aa).

The first 17 residues, 1 to 17, serve as a signal peptide directing secretion; sequence MKSLSFISLACLTAVHA. N82, N146, N163, N169, N288, N440, and N544 each carry an N-linked (GlcNAc...) asparagine glycan. The segment covering 528 to 544 has biased composition (low complexity); it reads SATIAAPATSESASQDN. The segment at 528–557 is disordered; it reads SATIAAPATSESASQDNTSDDTDSASTSSS. A lipid anchor (GPI-anchor amidated serine) is attached at S567. Residues 568-596 constitute a propeptide, removed in mature form; it reads SASKSAPTFYCLQLVLYLSLSFKNLYKYI.

Interacts with host integrin beta-1 ITGB1 on the cell surface of host alveolar epithelial cells.

The protein localises to the cell membrane. Its function is as follows. Promotes invasion of host epithelial cells by adhering to receptors on the host cell surface to facilitate endocytosis of the pathogen into host cells. Probably binds integrin ITGA3:ITGB1 via ITGB1, on the cell surface of host alveolar epithelial cells. In Rhizopus delemar (strain RA 99-880 / ATCC MYA-4621 / FGSC 9543 / NRRL 43880) (Mucormycosis agent), this protein is Invasin CotH7.